A 151-amino-acid chain; its full sequence is Large-conductance mechanosensitive channel (151 aa).

The next 2 helical transmembrane spans lie at glycine 12–threonine 32 and valine 71–valine 91. Residues asparagine 125 to threonine 151 form a disordered region.

This sequence belongs to the MscL family. Homopentamer.

The protein resides in the cell membrane. Its function is as follows. Channel that opens in response to stretch forces in the membrane lipid bilayer. May participate in the regulation of osmotic pressure changes within the cell. This is Large-conductance mechanosensitive channel from Mycobacterium ulcerans (strain Agy99).